A 144-amino-acid chain; its full sequence is L-fucose mutarotase (144 aa).

His-22 serves as the catalytic Proton donor. Substrate is bound by residues Asp-30, Arg-109, and 131–133 (YGN).

Belongs to the RbsD / FucU family. FucU mutarotase subfamily. In terms of assembly, homodecamer.

It is found in the cytoplasm. The enzyme catalyses alpha-L-fucose = beta-L-fucose. Its pathway is carbohydrate metabolism; L-fucose metabolism. Functionally, involved in the anomeric conversion of L-fucose. The protein is L-fucose mutarotase of Haemophilus influenzae (strain PittGG).